A 445-amino-acid chain; its full sequence is 3-phosphoshikimate 1-carboxyvinyltransferase (445 aa).

Positions 1–25 are disordered; that stretch reads MTDSNQPMPLQARKSGALHGTARVP. 3-phosphoshikimate contacts are provided by K28, S29, and R33. A phosphoenolpyruvate-binding site is contributed by K28. Phosphoenolpyruvate is bound by residues G101 and R129. S175, Q177, D328, and K355 together coordinate 3-phosphoshikimate. Residue Q177 coordinates phosphoenolpyruvate. D328 (proton acceptor) is an active-site residue. 2 residues coordinate phosphoenolpyruvate: R359 and R402.

The protein belongs to the EPSP synthase family. Monomer.

The protein localises to the cytoplasm. The catalysed reaction is 3-phosphoshikimate + phosphoenolpyruvate = 5-O-(1-carboxyvinyl)-3-phosphoshikimate + phosphate. It functions in the pathway metabolic intermediate biosynthesis; chorismate biosynthesis; chorismate from D-erythrose 4-phosphate and phosphoenolpyruvate: step 6/7. Catalyzes the transfer of the enolpyruvyl moiety of phosphoenolpyruvate (PEP) to the 5-hydroxyl of shikimate-3-phosphate (S3P) to produce enolpyruvyl shikimate-3-phosphate and inorganic phosphate. This Rhodopseudomonas palustris (strain ATCC BAA-98 / CGA009) protein is 3-phosphoshikimate 1-carboxyvinyltransferase.